A 150-amino-acid polypeptide reads, in one-letter code: Large ribosomal subunit protein uL13 (150 aa).

The interval 130-150 (EHPHSAQNPQVLSITTNELVK) is disordered. Polar residues predominate over residues 134 to 150 (SAQNPQVLSITTNELVK).

It belongs to the universal ribosomal protein uL13 family. As to quaternary structure, part of the 50S ribosomal subunit.

Functionally, this protein is one of the early assembly proteins of the 50S ribosomal subunit, although it is not seen to bind rRNA by itself. It is important during the early stages of 50S assembly. The chain is Large ribosomal subunit protein uL13 from Prochlorococcus marinus (strain SARG / CCMP1375 / SS120).